We begin with the raw amino-acid sequence, 495 residues long: UDP-N-acetylmuramoyl-L-alanyl-D-glutamate--2,6-diaminopimelate ligase (495 aa).

Residues Leu-32 and Ser-34 each contribute to the UDP-N-acetyl-alpha-D-muramoyl-L-alanyl-D-glutamate site. 119-125 (GTNGKTT) provides a ligand contact to ATP. Residues Asn-160, 161 to 162 (TT), Ser-188, Gln-194, and Arg-196 each bind UDP-N-acetyl-alpha-D-muramoyl-L-alanyl-D-glutamate. Lys-228 is modified (N6-carboxylysine). Residues Arg-390, 414–417 (DNPR), Gly-465, and Glu-469 each bind meso-2,6-diaminopimelate. The short motif at 414–417 (DNPR) is the Meso-diaminopimelate recognition motif element.

It belongs to the MurCDEF family. MurE subfamily. Mg(2+) is required as a cofactor. Post-translationally, carboxylation is probably crucial for Mg(2+) binding and, consequently, for the gamma-phosphate positioning of ATP.

Its subcellular location is the cytoplasm. It carries out the reaction UDP-N-acetyl-alpha-D-muramoyl-L-alanyl-D-glutamate + meso-2,6-diaminopimelate + ATP = UDP-N-acetyl-alpha-D-muramoyl-L-alanyl-gamma-D-glutamyl-meso-2,6-diaminopimelate + ADP + phosphate + H(+). It functions in the pathway cell wall biogenesis; peptidoglycan biosynthesis. Its function is as follows. Catalyzes the addition of meso-diaminopimelic acid to the nucleotide precursor UDP-N-acetylmuramoyl-L-alanyl-D-glutamate (UMAG) in the biosynthesis of bacterial cell-wall peptidoglycan. In Vibrio cholerae serotype O1 (strain ATCC 39315 / El Tor Inaba N16961), this protein is UDP-N-acetylmuramoyl-L-alanyl-D-glutamate--2,6-diaminopimelate ligase.